We begin with the raw amino-acid sequence, 403 residues long: Microtubule-associated protein tau (403 aa).

Over residues 1 to 32 (MAEPRQEFDVMEDHAQGDYTLQDHEGDMEPGL) the composition is skewed to basic and acidic residues. The tract at residues 1–219 (MAEPRQEFDV…GPMPDLKNVK (219 aa)) is disordered. Alanine 2 bears the N-acetylalanine mark. Tyrosine 19 is modified (phosphotyrosine). Lysine 33 is covalently cross-linked (Glycyl lysine isopeptide (Lys-Gly) (interchain with G-Cter in ubiquitin)). Serine 35 and serine 50 each carry phosphoserine. The span at 50–60 (SETSDAKSTPT) shows a compositional bias: polar residues. Phosphothreonine is present on residues threonine 58, threonine 60, and threonine 71. Over residues 90–106 (KGKDGTGPDDKKAKGAD) the composition is skewed to basic and acidic residues. Threonine 115 carries the post-translational modification Phosphothreonine. Residue arginine 117 is modified to Omega-N-methylarginine. Position 125 is an N6,N6-dimethyllysine; alternate (lysine 125). Lysine 125 bears the N6-acetyllysine; alternate mark. 4 positions are modified to phosphothreonine: threonine 131, threonine 137, threonine 138, and threonine 143. Positions 136-147 (KTTPTPKTSPGT) are enriched in low complexity. A phosphoserine mark is found at serine 153 and serine 157. Residues 156–176 (RSGYSSPGSPGTPGSRSRTPS) show a composition bias toward low complexity. Tyrosine 159 bears the Phosphotyrosine mark. A phosphoserine mark is found at serine 160, serine 161, and serine 164. A phosphothreonine mark is found at threonine 167 and threonine 174. Position 176 is a phosphoserine (serine 176). Threonine 179 carries the post-translational modification Phosphothreonine. The residue at position 187 (lysine 187) is an N6-acetyllysine. Position 193 is a phosphothreonine (threonine 193). Serine 197 and serine 199 each carry phosphoserine. Tau/MAP repeat units lie at residues 206–236 (QAAP…GGGK), 237–267 (VQII…GGGS), 268–298 (VQIV…GGGQ), and 299–330 (VEVK…GGGN). Lysine 216 is covalently cross-linked (Glycyl lysine isopeptide (Lys-Gly) (interchain with G-Cter in ubiquitin)). Lysine 221 carries the N6-acetyllysine; alternate modification. Lysine 221 is modified (N6-methyllysine; alternate). Lysine 221 participates in a covalent cross-link: Glycyl lysine isopeptide (Lys-Gly) (interchain with G-Cter in ubiquitin); alternate. Serine 224 carries the post-translational modification Phosphoserine. Lysine 229 is covalently cross-linked (Glycyl lysine isopeptide (Lys-Gly) (interchain with G-Cter in ubiquitin)). Lysine 243 is modified (N6-acetyllysine; alternate). Lysine 243 is covalently cross-linked (Glycyl lysine isopeptide (Lys-Gly) (interchain with G-Cter in ubiquitin); alternate). Phosphoserine is present on residues serine 247 and serine 251. Lysine 252 carries the post-translational modification N6-acetyllysine. A disulfide bond links cysteine 253 and cysteine 284. Phosphoserine is present on serine 255. Position 260 is an N6-acetyllysine; alternate (lysine 260). Lysine 260 participates in a covalent cross-link: Glycyl lysine isopeptide (Lys-Gly) (interchain with G-Cter in ubiquitin); alternate. Residue serine 267 is modified to Phosphoserine. An N6,N6-dimethyllysine; alternate modification is found at lysine 273. Residues lysine 273, lysine 279, and lysine 283 each carry the N6-acetyllysine; alternate modification. Glycyl lysine isopeptide (Lys-Gly) (interchain with G-Cter in ubiquitin); alternate cross-links involve residues lysine 273, lysine 279, and lysine 283. Serine 286 bears the Phosphoserine mark. Residues lysine 293, lysine 305, and lysine 309 each carry the N6-acetyllysine; alternate modification. Residues lysine 293, lysine 305, and lysine 309 each participate in a glycyl lysine isopeptide (Lys-Gly) (interchain with G-Cter in ubiquitin); alternate cross-link. Position 311 is an omega-N-methylarginine (arginine 311). Phosphoserine is present on serine 314. Lysine 315 is covalently cross-linked (Glycyl lysine isopeptide (Lys-Gly) (interchain with G-Cter in ubiquitin)). A Phosphoserine modification is found at serine 318. Lysine 331 carries the N6-acetyllysine; alternate modification. Residue lysine 331 forms a Glycyl lysine isopeptide (Lys-Gly) (interchain with G-Cter in ubiquitin); alternate linkage. A Glycyl lysine isopeptide (Lys-Gly) (interchain with G-Cter in ubiquitin) cross-link involves residue lysine 337. Lysine 347 carries the post-translational modification N6-acetyllysine; alternate. A Glycyl lysine isopeptide (Lys-Gly) (interchain with G-Cter in ubiquitin); alternate cross-link involves residue lysine 347. Tyrosine 356 carries the phosphotyrosine modification. Phosphoserine occurs at positions 358 and 362. The interval 360 to 379 (VVSGDTSPRHLSNVSSTGSI) is disordered. Residues 363-378 (GDTSPRHLSNVSSTGS) show a composition bias toward polar residues. Position 365 is a phosphothreonine (threonine 365). A phosphoserine mark is found at serine 366, serine 371, serine 378, and serine 384. Threonine 389 is subject to Phosphothreonine.

In terms of assembly, interacts with MARK1, MARK2, MARK3 and MARK4. Interacts with SQSTM1 when polyubiquitinated. Interacts with PSMC2 through SQSTM1. Interacts with FKBP4. Binds to CSNK1D. Interacts with SGK1. Interacts with PIN1. Interacts with LRRK2. Interacts with LRP1, leading to endocytosis; this interaction is reduced in the presence of LRPAP1/RAP. In terms of processing, polyubiquitinated. Requires functional TRAF6 and may provoke SQSTM1-dependent degradation by the proteasome. Post-translationally, phosphorylation at various serine and threonine residues in S-P or T-P motifs by proline-directed protein kinases (PDPK1, CDK1, CDK5, GSK3, MAPK) (a few sites per protein in interphase, more in mitosis), and at serine residues in K-X-G-S motifs by MAP/microtubule affinity-regulating kinase (MARK1, MARK2, MARK3, MARK4), causing detachment from microtubules, and their disassembly. Phosphorylation at Ser-224 by BRSK1 and BRSK2 in neurons affects ability to bind microtubules and plays a role in neuron polarization. Phosphorylated by PHK. Dephosphorylation at several serine and threonine residues by the serine/threonine phosphatase PPP5C. In terms of tissue distribution, expressed in neurons.

The protein localises to the cytoplasm. Its subcellular location is the cytosol. It is found in the cell membrane. The protein resides in the cytoskeleton. It localises to the cell projection. The protein localises to the axon. Its subcellular location is the dendrite. Promotes microtubule assembly and stability, and might be involved in the establishment and maintenance of neuronal polarity. The C-terminus binds axonal microtubules while the N-terminus binds neural plasma membrane components, suggesting that tau functions as a linker protein between both. Axonal polarity is predetermined by tau localization (in the neuronal cell) in the domain of the cell body defined by the centrosome. The short isoforms allow plasticity of the cytoskeleton whereas the longer isoforms may preferentially play a role in its stabilization. This Capra hircus (Goat) protein is Microtubule-associated protein tau (MAPT).